Consider the following 166-residue polypeptide: Probable RNA-binding protein EIF1AD (166 aa).

The region spanning 5–89 (TKRKHVVKEV…VKAEISFVLC (85 aa)) is the S1-like domain. Positions 6-12 (KRKHVVK) match the Nuclear localization signal motif. A Phosphothreonine modification is found at threonine 33. Residues 56–65 (KYRKNIWIKR) carry the Nuclear localization signal motif. The tract at residues 114 to 166 (NNNRNRQTQPELPAEPQLSGEESSSEDDSDLFVNTNRRQYRESEEESEEEEAA) is disordered. 6 positions are modified to phosphoserine: serine 132, serine 136, serine 137, serine 138, serine 156, and serine 160. Residues 156 to 166 (SEEESEEEEAA) show a composition bias toward acidic residues.

This sequence belongs to the EIF1AD family. In terms of assembly, interacts with GAPDH and STAT1.

It localises to the nucleus. Functionally, plays a role into cellular response to oxidative stress. Decreases cell proliferation. This is Probable RNA-binding protein EIF1AD (EIF1AD) from Pongo abelii (Sumatran orangutan).